The following is a 47-amino-acid chain: Bacteriocin curvaticin DN317 (47 aa).

The protein belongs to the bacteriocin class IIA/YGNGV family.

The protein resides in the secreted. Its function is as follows. Has bactericidal activity against various Gram-negative Campylobacter, and the Gram-positive L.monocytogenes and B.subtilis. In vitro, inhibits C.jejuni strain ATCC 33560 (MIC=27.3 ug/ml). The protein is Bacteriocin curvaticin DN317 of Latilactobacillus curvatus (Lactobacillus curvatus).